Here is a 156-residue protein sequence, read N- to C-terminus: ATP synthase subunit b (156 aa).

A helical membrane pass occupies residues 11-31 (AIAFVLFVLFCMKYIWPPIMA).

It belongs to the ATPase B chain family. In terms of assembly, F-type ATPases have 2 components, F(1) - the catalytic core - and F(0) - the membrane proton channel. F(1) has five subunits: alpha(3), beta(3), gamma(1), delta(1), epsilon(1). F(0) has three main subunits: a(1), b(2) and c(10-14). The alpha and beta chains form an alternating ring which encloses part of the gamma chain. F(1) is attached to F(0) by a central stalk formed by the gamma and epsilon chains, while a peripheral stalk is formed by the delta and b chains.

The protein localises to the cell inner membrane. Its function is as follows. F(1)F(0) ATP synthase produces ATP from ADP in the presence of a proton or sodium gradient. F-type ATPases consist of two structural domains, F(1) containing the extramembraneous catalytic core and F(0) containing the membrane proton channel, linked together by a central stalk and a peripheral stalk. During catalysis, ATP synthesis in the catalytic domain of F(1) is coupled via a rotary mechanism of the central stalk subunits to proton translocation. Component of the F(0) channel, it forms part of the peripheral stalk, linking F(1) to F(0). The chain is ATP synthase subunit b from Yersinia enterocolitica serotype O:8 / biotype 1B (strain NCTC 13174 / 8081).